The primary structure comprises 632 residues: MHGLLLAAGLLSLPLHVLAHPQPGTSLAGRAVDLNAYRMADRASYMSSDEMQAQQPHIASVSAGGYVETATEVVKRVMPGMTFRLVDDHYVGVSGISHVYFRQTMHGMDIDNSDFNVNIGKDGKVLSYGNSFYTGPAPDKAPMVKRDFSDPMQALHGVRKALNLPITADKATVKTVNEHEVTFMGTTGALSDPSAKLCYMAKEDGSLALTWRVETDMGDNWLLSYVDAKSTDQVHNVVDYVSHATYQVYRWPIPDPTEGKREILENPWNLRTSPFTWISDGKNNYTTTRGNNAIAQANPDGGNEYLNNYRPNNKNLKFEYPYSPNMSPPKTYIDASITQLFYSANMVHDLYYMLGFTEKAGNFQVNNRGQGGKGNDFVILNAQDGSGTNNANFATPPDGQPGRMRVYIWTKAQPARDSSFEAGTVIHEYTHGLSNRLCGGPANSACLNGLESGGMGEGWGDFFATAIRLKPNDNRNANYVHGEWVNNSPKGNRLFPYSTSLKTNPLVYTSCNKYNEVHAIGTVWASILYEVLWNLIDKHGKNDGPTPVFENGVPKDGKYLSLKLVLDGMAIQPCKPNFVQARNAIIDADKNLTKGANKCELWKAFAKRGLGTGAKYDPKNRTGSTAVPKECQ.

Residues 1 to 20 form the signal peptide; it reads MHGLLLAAGLLSLPLHVLAH. A propeptide spanning residues 21-244 is cleaved from the precursor; it reads PQPGTSLAGR…HNVVDYVSHA (224 aa). N-linked (GlcNAc...) asparagine glycosylation occurs at Asn284. Zn(2+) is bound at residue His427. Residue Glu428 is part of the active site. Zn(2+) is bound at residue His431. Residues Asn591 and Asn620 are each glycosylated (N-linked (GlcNAc...) asparagine).

This sequence belongs to the peptidase M36 family. It depends on Zn(2+) as a cofactor.

Its subcellular location is the secreted. In terms of biological role, secreted metalloproteinase probably acting as a virulence factor. This chain is Extracellular metalloproteinase 5 (MEP5), found in Arthroderma otae (strain ATCC MYA-4605 / CBS 113480) (Microsporum canis).